Here is a 290-residue protein sequence, read N- to C-terminus: UPF0750 membrane protein YdeO (290 aa).

Transmembrane regions (helical) follow at residues I18–P38, L56–G76, S83–H103, D112–L132, and L165–I185.

Belongs to the UPF0750 family.

The protein resides in the cell membrane. This Bacillus subtilis (strain 168) protein is UPF0750 membrane protein YdeO (ydeO).